The sequence spans 312 residues: Coproporphyrin III ferrochelatase (312 aa).

Fe-coproporphyrin III is bound by residues Tyr-13, Arg-30, Arg-46–Tyr-47, Ser-54, and Tyr-125. Residues His-183 and Glu-264 each contribute to the Fe(2+) site.

It belongs to the ferrochelatase family.

It localises to the cytoplasm. It carries out the reaction Fe-coproporphyrin III + 2 H(+) = coproporphyrin III + Fe(2+). The protein operates within porphyrin-containing compound metabolism; protoheme biosynthesis. In terms of biological role, involved in coproporphyrin-dependent heme b biosynthesis. Catalyzes the insertion of ferrous iron into coproporphyrin III to form Fe-coproporphyrin III. The sequence is that of Coproporphyrin III ferrochelatase from Bacillus pumilus (strain SAFR-032).